The following is a 144-amino-acid chain: Large ribosomal subunit protein uL14 (144 aa).

Belongs to the universal ribosomal protein uL14 family. In terms of assembly, part of the 50S ribosomal subunit. Forms a cluster with proteins L3 and L24e, part of which may contact the 16S rRNA in 2 intersubunit bridges.

Its function is as follows. Binds to 23S rRNA. Forms part of two intersubunit bridges in the 70S ribosome. The sequence is that of Large ribosomal subunit protein uL14 from Caldivirga maquilingensis (strain ATCC 700844 / DSM 13496 / JCM 10307 / IC-167).